The sequence spans 284 residues: Pseudopaline exporter CntI (284 aa).

10 consecutive transmembrane segments (helical) span residues 2–22 (VLDL…TFSV), 34–54 (LPAA…IYLL), 74–94 (GVMG…IPLA), 96–116 (ASIL…LFLG), 122–142 (AVYW…KPFS), 147–167 (SVYA…SVAI), 179–199 (IVFY…WNDF), 209–229 (GLLL…TRAF), 236–256 (IVAV…WLFW), and 259–279 (VPDA…IALS). EamA domains follow at residues 8 to 138 (SGVL…LMIV) and 151 to 279 (VVGL…IALS).

The protein belongs to the EamA transporter family.

It localises to the cell inner membrane. In terms of biological role, transports the metallophore pseudopaline, which is involved in the acquisition of nickel and zinc, and thus enables bacterial growth inside the host, where metal access is limited. Is probably involved in the export of pseudopaline. Essential for iron acquisition during the interaction with airway mucus secretions (AMS). The polypeptide is Pseudopaline exporter CntI (Pseudomonas aeruginosa (strain ATCC 15692 / DSM 22644 / CIP 104116 / JCM 14847 / LMG 12228 / 1C / PRS 101 / PAO1)).